A 255-amino-acid polypeptide reads, in one-letter code: ATP synthase subunit a 2 (255 aa).

5 helical membrane-spanning segments follow: residues 26–46 (SINI…IGVF), 86–106 (LIGP…SIDL), 131–151 (DVNV…GYTL), 205–225 (MIFI…SVPW), and 230–250 (ILIV…YLAM).

This sequence belongs to the ATPase A chain family. F-type ATPases have 2 components, CF(1) - the catalytic core - and CF(0) - the membrane proton channel. CF(1) has five subunits: alpha(3), beta(3), gamma(1), delta(1), epsilon(1). CF(0) has three main subunits: a(1), b(2) and c(9-12). The alpha and beta chains form an alternating ring which encloses part of the gamma chain. CF(1) is attached to CF(0) by a central stalk formed by the gamma and epsilon chains, while a peripheral stalk is formed by the delta and b chains.

It localises to the cell inner membrane. In terms of biological role, key component of the proton channel; it plays a direct role in the translocation of protons across the membrane. The protein is ATP synthase subunit a 2 of Photobacterium profundum (strain SS9).